Here is a 382-residue protein sequence, read N- to C-terminus: Innexin-8 (382 aa).

4 consecutive transmembrane segments (helical) span residues Leu29–Gly49, Gln103–Trp123, Val187–Leu207, and Ile270–Phe290.

The protein belongs to the pannexin family.

The protein resides in the cell membrane. The protein localises to the cell junction. It localises to the gap junction. Functionally, structural component of the gap junctions. This chain is Innexin-8 (inx-8), found in Caenorhabditis elegans.